The sequence spans 215 residues: Leucyl/phenylalanyl-tRNA--protein transferase (215 aa).

It belongs to the L/F-transferase family.

Its subcellular location is the cytoplasm. The catalysed reaction is N-terminal L-lysyl-[protein] + L-leucyl-tRNA(Leu) = N-terminal L-leucyl-L-lysyl-[protein] + tRNA(Leu) + H(+). It carries out the reaction N-terminal L-arginyl-[protein] + L-leucyl-tRNA(Leu) = N-terminal L-leucyl-L-arginyl-[protein] + tRNA(Leu) + H(+). It catalyses the reaction L-phenylalanyl-tRNA(Phe) + an N-terminal L-alpha-aminoacyl-[protein] = an N-terminal L-phenylalanyl-L-alpha-aminoacyl-[protein] + tRNA(Phe). Its function is as follows. Functions in the N-end rule pathway of protein degradation where it conjugates Leu, Phe and, less efficiently, Met from aminoacyl-tRNAs to the N-termini of proteins containing an N-terminal arginine or lysine. This is Leucyl/phenylalanyl-tRNA--protein transferase from Campylobacter jejuni subsp. doylei (strain ATCC BAA-1458 / RM4099 / 269.97).